A 339-amino-acid chain; its full sequence is GTPase Era (339 aa).

The region spanning 4–48 (RHLAKFAYREEFKGDTEALAAAVREDASTGSTSQLPLEVQFGKMS) is the RPE1 insert domain. Residues 51 to 220 (KTVSVCIIGR…ITSKAKISPW (170 aa)) enclose the Era-type G domain. The segment at 59–66 (GRPNSGKS) is G1. 59 to 66 (GRPNSGKS) serves as a coordination point for GTP. The tract at residues 85–89 (QTTRS) is G2. Positions 106-109 (DTPG) are G3. Residues 106-110 (DTPGI) and 168-171 (NKID) contribute to the GTP site. The interval 168 to 171 (NKID) is G4. Residues 196 to 198 (ISA) are G5. Residues 248-325 (LQKELPYKLT…HLFLFVKVRE (78 aa)) form the KH type-2 domain.

This sequence belongs to the TRAFAC class TrmE-Era-EngA-EngB-Septin-like GTPase superfamily. Era GTPase family. As to quaternary structure, monomer.

The protein resides in the cytoplasm. Its subcellular location is the cell inner membrane. Its function is as follows. An essential GTPase that binds both GDP and GTP, with rapid nucleotide exchange. Plays a role in 16S rRNA processing and 30S ribosomal subunit biogenesis and possibly also in cell cycle regulation and energy metabolism. The polypeptide is GTPase Era (Rickettsia conorii (strain ATCC VR-613 / Malish 7)).